A 147-amino-acid chain; its full sequence is D-aminoacyl-tRNA deacylase (147 aa).

The short motif at 136-137 (GP) is the Gly-cisPro motif, important for rejection of L-amino acids element.

The protein belongs to the DTD family. As to quaternary structure, homodimer.

The protein localises to the cytoplasm. It carries out the reaction glycyl-tRNA(Ala) + H2O = tRNA(Ala) + glycine + H(+). The enzyme catalyses a D-aminoacyl-tRNA + H2O = a tRNA + a D-alpha-amino acid + H(+). Functionally, an aminoacyl-tRNA editing enzyme that deacylates mischarged D-aminoacyl-tRNAs. Also deacylates mischarged glycyl-tRNA(Ala), protecting cells against glycine mischarging by AlaRS. Acts via tRNA-based rather than protein-based catalysis; rejects L-amino acids rather than detecting D-amino acids in the active site. By recycling D-aminoacyl-tRNA to D-amino acids and free tRNA molecules, this enzyme counteracts the toxicity associated with the formation of D-aminoacyl-tRNA entities in vivo and helps enforce protein L-homochirality. This chain is D-aminoacyl-tRNA deacylase, found in Streptococcus pneumoniae serotype 4 (strain ATCC BAA-334 / TIGR4).